A 279-amino-acid chain; its full sequence is Apolipoprotein L domain-containing protein 1 (279 aa).

The next 3 membrane-spanning stretches (helical) occupy residues 83 to 105 (SLVA…IVGL), 122 to 142 (GLGV…SLIF), and 192 to 212 (IALY…FLIP). Positions 226 to 253 (LKAKIQKLAESLESCTGALDELSEQLES) form a coiled coil.

The protein belongs to the apolipoprotein L family. Expressed in neonatal dermal microvascular endothelial cells.

It localises to the cell membrane. Its subcellular location is the cell junction. The protein localises to the cytoplasmic vesicle. It is found in the secretory vesicle. Functionally, is a modulator of endothelial barrier permeability, required for proper organization of endothelial cell-cell junctions and cytoskeleton. It also plays a role in the modulation of secretory autophagy. May affect blood-brain barrier permeability. In Homo sapiens (Human), this protein is Apolipoprotein L domain-containing protein 1 (APOLD1).